The primary structure comprises 178 residues: Large ribosomal subunit protein uL6 (178 aa).

This sequence belongs to the universal ribosomal protein uL6 family. In terms of assembly, part of the 50S ribosomal subunit.

Its function is as follows. This protein binds to the 23S rRNA, and is important in its secondary structure. It is located near the subunit interface in the base of the L7/L12 stalk, and near the tRNA binding site of the peptidyltransferase center. This is Large ribosomal subunit protein uL6 from Streptococcus pyogenes serotype M3 (strain ATCC BAA-595 / MGAS315).